Here is a 1293-residue protein sequence, read N- to C-terminus: Late blight resistance protein R1-A (1293 aa).

Coiled-coil stretches lie at residues 423–446 (RYSD…ESLQ) and 538–560 (PRMN…KLLN). The NB-ARC domain maps to 539-826 (RMNEEIVGFE…SEAFIKSSEG (288 aa)). An ATP-binding site is contributed by 572-579 (GMPGLGKT). LRR repeat units lie at residues 876–899 (AEEN…VYSH), 956–981 (FKFL…VYLK), 1027–1049 (MVKL…LLEN), 1056–1079 (LETL…KTPN), 1102–1125 (PIRL…ISAP), 1149–1172 (LKHL…KVSN), 1175–1197 (FPQL…ADDA), 1198–1222 (FPNL…FMDI), and 1235–1259 (ESVV…NFKL).

The protein belongs to the disease resistance NB-LRR family.

The protein localises to the cytoplasm. The protein resides in the membrane. Its function is as follows. Confers resistance to late blight (Phytophthora infestans) races carrying the avirulence gene Avr1. Resistance proteins guard the plant against pathogens that contain an appropriate avirulence protein via an indirect interaction with this avirulence protein. That triggers a defense system including the hypersensitive response, which restricts the pathogen growth. The protein is Late blight resistance protein R1-A (R1A) of Solanum demissum (Wild potato).